Reading from the N-terminus, the 203-residue chain is HTH-type transcriptional regulator BetI (203 aa).

In terms of domain architecture, HTH tetR-type spans 8-68 (PVRRKALVDA…ATIRSLLGKL (61 aa)). The segment at residues 31-50 (TMSEIARTAGVSPALAHHYF) is a DNA-binding region (H-T-H motif).

It functions in the pathway amine and polyamine biosynthesis; betaine biosynthesis via choline pathway [regulation]. Functionally, repressor involved in the biosynthesis of the osmoprotectant glycine betaine. It represses transcription of the choline transporter BetT and the genes of BetAB involved in the synthesis of glycine betaine. This Rhizobium meliloti (strain 1021) (Ensifer meliloti) protein is HTH-type transcriptional regulator BetI.